The primary structure comprises 264 residues: 3-methyl-2-oxobutanoate hydroxymethyltransferase (264 aa).

Positions 45 and 84 each coordinate Mg(2+). 3-methyl-2-oxobutanoate is bound by residues 45–46 (DS), Asp-84, and Lys-112. Glu-114 is a binding site for Mg(2+). Glu-181 (proton acceptor) is an active-site residue.

Belongs to the PanB family. In terms of assembly, homodecamer; pentamer of dimers. The cofactor is Mg(2+).

Its subcellular location is the cytoplasm. The catalysed reaction is 3-methyl-2-oxobutanoate + (6R)-5,10-methylene-5,6,7,8-tetrahydrofolate + H2O = 2-dehydropantoate + (6S)-5,6,7,8-tetrahydrofolate. It participates in cofactor biosynthesis; (R)-pantothenate biosynthesis; (R)-pantoate from 3-methyl-2-oxobutanoate: step 1/2. Functionally, catalyzes the reversible reaction in which hydroxymethyl group from 5,10-methylenetetrahydrofolate is transferred onto alpha-ketoisovalerate to form ketopantoate. This chain is 3-methyl-2-oxobutanoate hydroxymethyltransferase, found in Shigella sonnei (strain Ss046).